A 205-amino-acid chain; its full sequence is FMN-dependent NADH:quinone oxidoreductase (205 aa).

FMN-binding positions include serine 10, 16–18, and 96–99; these read SHS and MYNF.

Belongs to the azoreductase type 1 family. In terms of assembly, homodimer. Requires FMN as cofactor.

The catalysed reaction is 2 a quinone + NADH + H(+) = 2 a 1,4-benzosemiquinone + NAD(+). The enzyme catalyses N,N-dimethyl-1,4-phenylenediamine + anthranilate + 2 NAD(+) = 2-(4-dimethylaminophenyl)diazenylbenzoate + 2 NADH + 2 H(+). Its function is as follows. Quinone reductase that provides resistance to thiol-specific stress caused by electrophilic quinones. Also exhibits azoreductase activity. Catalyzes the reductive cleavage of the azo bond in aromatic azo compounds to the corresponding amines. The sequence is that of FMN-dependent NADH:quinone oxidoreductase from Nostoc punctiforme (strain ATCC 29133 / PCC 73102).